The following is a 230-amino-acid chain: 2-C-methyl-D-erythritol 4-phosphate cytidylyltransferase (230 aa).

The protein belongs to the IspD/TarI cytidylyltransferase family. IspD subfamily.

The enzyme catalyses 2-C-methyl-D-erythritol 4-phosphate + CTP + H(+) = 4-CDP-2-C-methyl-D-erythritol + diphosphate. It functions in the pathway isoprenoid biosynthesis; isopentenyl diphosphate biosynthesis via DXP pathway; isopentenyl diphosphate from 1-deoxy-D-xylulose 5-phosphate: step 2/6. Functionally, catalyzes the formation of 4-diphosphocytidyl-2-C-methyl-D-erythritol from CTP and 2-C-methyl-D-erythritol 4-phosphate (MEP). The sequence is that of 2-C-methyl-D-erythritol 4-phosphate cytidylyltransferase from Shewanella halifaxensis (strain HAW-EB4).